We begin with the raw amino-acid sequence, 177 residues long: Large ribosomal subunit protein uL6 (177 aa).

This sequence belongs to the universal ribosomal protein uL6 family. Part of the 50S ribosomal subunit.

In terms of biological role, this protein binds to the 23S rRNA, and is important in its secondary structure. It is located near the subunit interface in the base of the L7/L12 stalk, and near the tRNA binding site of the peptidyltransferase center. The sequence is that of Large ribosomal subunit protein uL6 from Rhizobium johnstonii (strain DSM 114642 / LMG 32736 / 3841) (Rhizobium leguminosarum bv. viciae).